A 50-amino-acid polypeptide reads, in one-letter code: Thrombin-like enzyme BpirSP27 (50 aa).

Positions 1–50 constitute a Peptidase S1 domain; the sequence is VVGGDECNINEHRSLVAIFNSTGFFCSGILLNQEWVLTASHCDSTNFQMK. N-linked (GlcNAc...) asparagine glycosylation is present at Asn-20. Cys-26 and Cys-42 are joined by a disulfide. The Charge relay system role is filled by His-41.

The protein belongs to the peptidase S1 family. Snake venom subfamily. Monomer. N-glycosylated. In terms of tissue distribution, expressed by the venom gland.

The protein localises to the secreted. Inhibited by serine protease inhibitors PMSF, benzamidine, leupeptin and aprotinin, as well as by copper (Cu2+) and manganese (Mn2+) ions. Not inhibited by metalloprotease inhibitors EDTA, EGTA and 1,10-phenanthroline, as well as by barium (Ba2+) and calcium ion (Ca2+). In terms of biological role, snake venom serine protease that interferes with the hemostatic system of the prey. It preferentially degrades the Bbeta chain (FGB) of fibrinogen, with minor effects on the Aalpha chain (FGA). It presents a lower ability to degrade fibrin clots than BpirSP41. It hydrolyzes chromogenic substrates S-2238 (used for testing thrombin activity), S-2222 (factor Xa), S-2266 (glandular kallikrein and factor XIa), S-2302 (plasma kallikrein, factor XIa and XIIa), and S-2251 (plasmin). It shows a decrease in the clotting time of human plasma in the presence of increasing doses of the enzyme. Its minimum coagulant dose (MCD) is 3.5 ug. It also promotes platelet aggregation in a concentration-dependent manner in the presence or absence of calcium. It also shows 20% inhibition of the hemolytic activity promoted by the complement pathways and possess only a minor role in the induction of edema and pain in rat. The sequence is that of Thrombin-like enzyme BpirSP27 from Bothrops pirajai (Piraja's lancehead).